The following is a 647-amino-acid chain: MSAALLEISGCYRTFQAGEQQLTVLKDVNLTIERGEMVAIVGASGSGKSTLMNILGCLDKPSKGAYFINGQDTSTMDADELAQLRREHFGFIFQRYHLLSDLTAIGNVEVPAVYAGKERSARKDRAEHLLTRLGLGDRLDHKPNQLSGGQQQRVSVARALMNGGDVILADEPTGALDSHSGEEMMQLLQELHSDGHTIIIVTHDMNVAQYADRIIEIKDGIIISDERKTKAPKHVDTAVTKINNRIRVASWDRYVEAFKMALLAMSTHRLRTFLTMLGIIIGIASVVSVVALGEGSQREILNSISSMGTNTIDIRPGFGFGDRRSGKVKTLIVKDADALKHLPYVDSVTPTVDSSMTLRYGNKAVTTVVNGVGPEFFRVRGYELAMGQFWDEDSVSSLAQDAVIDDKVRKELFPRSSPIGEVIFIGNLPVRIIGVTEPKDSVFGKSDSLNVWLPYTTLSGRIVGKNYLNGITVRLNESVPSNAAEQGIITLLKMRHGIEDFFTINTDAIRQNIEKTTATMTLLISAIAVISLIVGGIGVMNIMLVSVTERTREIGVRMAVGARQSDILRQFLIEAVLVCLCGGTLGIALAYLIGVVFAQTGGSFQMIYSTTSIVAAFACSTLIGVLFGFLPARNAARLDPVDALARE.

The ABC transporter domain maps to 6–244; sequence LEISGCYRTF…VDTAVTKINN (239 aa). 42-49 lines the ATP pocket; the sequence is GASGSGKS. The next 4 membrane-spanning stretches (helical) occupy residues 273–293, 522–542, 577–597, and 612–632; these read FLTMLGIIIGIASVVSVVALG, LLISAIAVISLIVGGIGVMNI, LVCLCGGTLGIALAYLIGVVF, and SIVAAFACSTLIGVLFGFLPA.

This sequence belongs to the ABC transporter superfamily. Macrolide exporter (TC 3.A.1.122) family. Homodimer. Part of the tripartite efflux system MacAB-TolC, which is composed of an inner membrane transporter, MacB, a periplasmic membrane fusion protein, MacA, and an outer membrane component, TolC. The complex forms a large protein conduit and can translocate molecules across both the inner and outer membranes. Interacts with MacA.

The protein localises to the cell inner membrane. Its function is as follows. Part of the tripartite efflux system MacAB-TolC. MacB is a non-canonical ABC transporter that contains transmembrane domains (TMD), which form a pore in the inner membrane, and an ATP-binding domain (NBD), which is responsible for energy generation. Confers resistance against macrolides. This chain is Macrolide export ATP-binding/permease protein MacB, found in Shewanella sp. (strain W3-18-1).